Consider the following 164-residue polypeptide: Lipoprotein signal peptidase (164 aa).

Helical transmembrane passes span methionine 2–leucine 22, valine 40–phenylalanine 60, tryptophan 70–alanine 90, and leucine 99–glycine 119. Catalysis depends on residues aspartate 123 and aspartate 142. The chain crosses the membrane as a helical span at residues phenylalanine 138–isoleucine 158.

Belongs to the peptidase A8 family.

The protein localises to the cell inner membrane. It catalyses the reaction Release of signal peptides from bacterial membrane prolipoproteins. Hydrolyzes -Xaa-Yaa-Zaa-|-(S,diacylglyceryl)Cys-, in which Xaa is hydrophobic (preferably Leu), and Yaa (Ala or Ser) and Zaa (Gly or Ala) have small, neutral side chains.. It functions in the pathway protein modification; lipoprotein biosynthesis (signal peptide cleavage). Functionally, this protein specifically catalyzes the removal of signal peptides from prolipoproteins. This is Lipoprotein signal peptidase from Tolumonas auensis (strain DSM 9187 / NBRC 110442 / TA 4).